A 991-amino-acid polypeptide reads, in one-letter code: Translation initiation factor IF-2 (991 aa).

Disordered regions lie at residues 58–82 (EGKKITLTRRQTSEIRQADATGRSR) and 106–405 (QARA…PAPQ). Residues 106–164 (QARADAAASDAAPAEPAPAAAEPSASAPVTAPVNAPAADAPQAPATAAPDTAAPAAETP) show a composition bias toward low complexity. Over residues 165–175 (SQPPAVEPQPA) the composition is skewed to pro residues. Composition is skewed to low complexity over residues 190 to 206 (AKPAEAPAEPAAPAAVE), 221 to 258 (AVQAEIETAPAPAAESAQAARPEPVTPKAEPAPAASKP), and 267 to 276 (APVPVAAPAV). Positions 279–289 (AGREEARRAAE) are enriched in basic and acidic residues. The segment covering 379-388 (RAGGKGGKGG) has biased composition (gly residues). Basic and acidic residues predominate over residues 395–405 (QAERRHEPAPQ). The 168-residue stretch at 492–659 (PRAPVVTVMG…NVLLQAEILE (168 aa)) folds into the tr-type G domain. Positions 501 to 508 (GHVDHGKT) are G1. 501–508 (GHVDHGKT) provides a ligand contact to GTP. Residues 526–530 (GITQH) form a G2 region. The G3 stretch occupies residues 547 to 550 (DTPG). GTP-binding positions include 547-551 (DTPGH) and 601-604 (NKID). Positions 601–604 (NKID) are G4. Positions 637 to 639 (SAK) are G5.

This sequence belongs to the TRAFAC class translation factor GTPase superfamily. Classic translation factor GTPase family. IF-2 subfamily.

It localises to the cytoplasm. Its function is as follows. One of the essential components for the initiation of protein synthesis. Protects formylmethionyl-tRNA from spontaneous hydrolysis and promotes its binding to the 30S ribosomal subunits. Also involved in the hydrolysis of GTP during the formation of the 70S ribosomal complex. In Bordetella petrii (strain ATCC BAA-461 / DSM 12804 / CCUG 43448), this protein is Translation initiation factor IF-2.